Consider the following 143-residue polypeptide: 5-hydroxymethyl-dUMP N-hydrolase (143 aa).

8 residues coordinate 5-hydroxymethyl-dUMP: G7, I9, R10, G11, S77, G79, E83, and S107.

The protein belongs to the 2'-deoxynucleoside 5'-phosphate N-hydrolase 1 family. Monomer and homodimer.

The protein localises to the cytoplasm. The protein resides in the nucleus. The catalysed reaction is 5-hydroxymethyl-dUMP + H2O = 5-hydroxymethyluracil + 2-deoxy-D-ribose 5-phosphate. Part of a nucleotide salvage pathway that eliminates epigenetically modified 5-hydroxymethyl-dCMP (hmdCMP) in a two-step process entailing deamination to cytotoxic 5-hydroxymethyl-dUMP (hmdUMP), followed by its hydrolysis into 5-hydroxymethyluracil (hmU) and 2-deoxy-D-ribose 5-phosphate (deoxyribosephosphate). This is 5-hydroxymethyl-dUMP N-hydrolase (dnph1) from Danio rerio (Zebrafish).